Reading from the N-terminus, the 152-residue chain is MPSVRLGVGLLAGLAAGGAVVLLSYCVYLDWRRHRDPAFRRRLQDKRRAGQPKAQAPARQLWDPVKKEELQEYFFREVQMGKLCLIRGERGMGFEHLTNALLVCEQPKELLMFFKKTLPPEVFQMLLDKIPLICQQLEETCRSTEHLKDDPD.

Topologically, residues 1–6 (MPSVRL) are mitochondrial intermembrane. A helical transmembrane segment spans residues 7 to 27 (GVGLLAGLAAGGAVVLLSYCV). Topologically, residues 28–152 (YLDWRRHRDP…STEHLKDDPD (125 aa)) are cytoplasmic.

This sequence belongs to the Tom20 family.

It is found in the mitochondrion outer membrane. The polypeptide is TOMM20-like protein 1 (Tomm20l) (Mus musculus (Mouse)).